The chain runs to 361 residues: MSIDQRLQLITRNAAEIITIDELRKKLESEEKLKGYIGFEPSGLFHIGWLIWTQKVKDLVEAGVNMTLLRATWHAWINDKLGGDLSLIKMAADYTVEVIKNYGVDTTKLNIVDADDMVKEKDYWALVIKVAKNASLARIKRALTIMGRRAEEAEIDASKLIYPAMQVSDIFYLDLDIALGGTDQRKAHMLARDVAEKMGKKKIVSIHTPLLVGLQGGQRMSITEGMEEDDIQAEIKMSKSKPESAIFVSDSREDVERKIMGAYCPKGVAENNPILQILKYIIFPRYNFVKIERDIRYGGDVEFKDYEELERAYIEGKIHPMDLKKATARRLNEILEPIRKSLERKPEFEEMIQKISKSVTR.

5 residues coordinate L-tyrosine: Tyr36, Tyr162, Gln166, Asp169, and Gln184. Residues Lys236–Ser240 carry the 'KMSKS' region motif. An ATP-binding site is contributed by Lys239.

This sequence belongs to the class-I aminoacyl-tRNA synthetase family. TyrS type 4 subfamily. In terms of assembly, homodimer.

It localises to the cytoplasm. It carries out the reaction tRNA(Tyr) + L-tyrosine + ATP = L-tyrosyl-tRNA(Tyr) + AMP + diphosphate + H(+). In terms of biological role, catalyzes the attachment of tyrosine to tRNA(Tyr) in a two-step reaction: tyrosine is first activated by ATP to form Tyr-AMP and then transferred to the acceptor end of tRNA(Tyr). This chain is Tyrosine--tRNA ligase, found in Saccharolobus islandicus (strain L.S.2.15 / Lassen #1) (Sulfolobus islandicus).